The primary structure comprises 147 residues: Prefoldin subunit alpha (147 aa).

The protein belongs to the prefoldin subunit alpha family. Heterohexamer of two alpha and four beta subunits.

It localises to the cytoplasm. Its function is as follows. Molecular chaperone capable of stabilizing a range of proteins. Seems to fulfill an ATP-independent, HSP70-like function in archaeal de novo protein folding. The chain is Prefoldin subunit alpha (pfdA) from Saccharolobus solfataricus (strain ATCC 35092 / DSM 1617 / JCM 11322 / P2) (Sulfolobus solfataricus).